The chain runs to 501 residues: Pyruvate kinase (501 aa).

Position 50 (Arg50) interacts with substrate. K(+) contacts are provided by Asn52, Ser54, Asp85, and Thr86. 52-55 (NFSH) provides a ligand contact to ATP. Residues Arg92 and Lys178 each contribute to the ATP site. Residue Glu243 participates in Mg(2+) binding. 3 residues coordinate substrate: Gly266, Asp267, and Thr299. Position 267 (Asp267) interacts with Mg(2+).

This sequence belongs to the pyruvate kinase family. Homotetramer. Mg(2+) is required as a cofactor. Requires K(+) as cofactor.

It catalyses the reaction pyruvate + ATP = phosphoenolpyruvate + ADP + H(+). Its pathway is carbohydrate degradation; glycolysis; pyruvate from D-glyceraldehyde 3-phosphate: step 5/5. The protein is Pyruvate kinase (PYK1) of Kluyveromyces lactis (strain ATCC 8585 / CBS 2359 / DSM 70799 / NBRC 1267 / NRRL Y-1140 / WM37) (Yeast).